Here is a 97-residue protein sequence, read N- to C-terminus: Aspartyl/glutamyl-tRNA(Asn/Gln) amidotransferase subunit C (97 aa).

This sequence belongs to the GatC family. Heterotrimer of A, B and C subunits.

The catalysed reaction is L-glutamyl-tRNA(Gln) + L-glutamine + ATP + H2O = L-glutaminyl-tRNA(Gln) + L-glutamate + ADP + phosphate + H(+). It carries out the reaction L-aspartyl-tRNA(Asn) + L-glutamine + ATP + H2O = L-asparaginyl-tRNA(Asn) + L-glutamate + ADP + phosphate + 2 H(+). Its function is as follows. Allows the formation of correctly charged Asn-tRNA(Asn) or Gln-tRNA(Gln) through the transamidation of misacylated Asp-tRNA(Asn) or Glu-tRNA(Gln) in organisms which lack either or both of asparaginyl-tRNA or glutaminyl-tRNA synthetases. The reaction takes place in the presence of glutamine and ATP through an activated phospho-Asp-tRNA(Asn) or phospho-Glu-tRNA(Gln). The sequence is that of Aspartyl/glutamyl-tRNA(Asn/Gln) amidotransferase subunit C from Synechococcus sp. (strain JA-2-3B'a(2-13)) (Cyanobacteria bacterium Yellowstone B-Prime).